The following is a 125-amino-acid chain: Fluoride-specific ion channel FluC (125 aa).

4 helical membrane-spanning segments follow: residues 5–25 (LLVALGGALGSLLRYGLGALV), 29–49 (LGAGFPWSTLFVNALGSFLIG), 66–86 (LFLAVGVLGGFTTFSSLSYET), and 95–115 (VGKALLYAFGSLFLGLFLAFL). The Na(+) site is built by G74 and T77.

It belongs to the fluoride channel Fluc/FEX (TC 1.A.43) family.

The protein localises to the cell inner membrane. It catalyses the reaction fluoride(in) = fluoride(out). With respect to regulation, na(+) is not transported, but it plays an essential structural role and its presence is essential for fluoride channel function. In terms of biological role, fluoride-specific ion channel. Important for reducing fluoride concentration in the cell, thus reducing its toxicity. This Thermus thermophilus (strain ATCC 27634 / DSM 579 / HB8) protein is Fluoride-specific ion channel FluC.